Consider the following 304-residue polypeptide: Serine protease 30 (304 aa).

Residues 1 to 21 (MESWARCIFLLLLQILTGGRG) form the signal peptide. A propeptide spans 22 to 30 (DILHSGAGK) (activation peptide). One can recognise a Peptidase S1 domain in the interval 31-271 (IVGGQDAPEG…YVDWIQRTLA (241 aa)). A disulfide bond links C57 and C73. Residue H72 is the Charge relay system of the active site. A glycan (N-linked (GlcNAc...) asparagine) is linked at N79. D122 serves as the catalytic Charge relay system. 3 disulfides stabilise this stretch: C155-C229, C185-C208, and C219-C247. S223 acts as the Charge relay system in catalysis. N232 and N273 each carry an N-linked (GlcNAc...) asparagine glycan. S275 carries the GPI-anchor amidated serine lipid modification. A propeptide spans 276 to 304 (DAYGCRSRASGAYPALLLVLLAFALPESL) (removed in mature form).

The protein belongs to the peptidase S1 family. As to expression, expressed predominantly in kidney, small intestine and stomach and moderately in thymus, lung, spleen, testis and skin. In the kidney, expressed mainly in collecting duct of renal medulla and cortex.

The protein localises to the cell membrane. Inhibited by aprotinin, leupeptin, benzamidine and soybean trypsin inhibitor. Partially inhibited by PMSF and DFP. Functionally, selectively cleaves synthetic peptide substrates of trypsin. Activates the epithelial sodium channel ENaC. The polypeptide is Serine protease 30 (Prss30) (Rattus norvegicus (Rat)).